We begin with the raw amino-acid sequence, 192 residues long: Ion-translocating oxidoreductase complex subunit B (192 aa).

The segment at M1–S26 is hydrophobic. Residues E32–V91 form the 4Fe-4S domain. C49, C52, C57, C74, C117, C120, C123, C127, C147, C150, C153, and C157 together coordinate [4Fe-4S] cluster. 2 4Fe-4S ferredoxin-type domains span residues V108–R137 and A138–V167.

Belongs to the 4Fe4S bacterial-type ferredoxin family. RnfB subfamily. As to quaternary structure, the complex is composed of six subunits: RsxA, RsxB, RsxC, RsxD, RsxE and RsxG. It depends on [4Fe-4S] cluster as a cofactor.

The protein resides in the cell inner membrane. In terms of biological role, part of a membrane-bound complex that couples electron transfer with translocation of ions across the membrane. Required to maintain the reduced state of SoxR. This Escherichia fergusonii (strain ATCC 35469 / DSM 13698 / CCUG 18766 / IAM 14443 / JCM 21226 / LMG 7866 / NBRC 102419 / NCTC 12128 / CDC 0568-73) protein is Ion-translocating oxidoreductase complex subunit B.